The sequence spans 120 residues: ATP-dependent Clp protease adapter protein ClpS (120 aa).

Positions 1–27 (MHAPSEIRLTFNQDRPQSNEDDGSGLA) are disordered.

The protein belongs to the ClpS family. In terms of assembly, binds to the N-terminal domain of the chaperone ClpA.

Functionally, involved in the modulation of the specificity of the ClpAP-mediated ATP-dependent protein degradation. This Pseudomonas putida (strain GB-1) protein is ATP-dependent Clp protease adapter protein ClpS.